The following is a 169-amino-acid chain: Shikimate kinase (169 aa).

13-18 (GAGKST) is a binding site for ATP. S17 provides a ligand contact to Mg(2+). Substrate is bound by residues D35, R59, and G80. Residue R117 participates in ATP binding. R136 contacts substrate. R153 contacts ATP.

This sequence belongs to the shikimate kinase family. In terms of assembly, monomer. The cofactor is Mg(2+).

It localises to the cytoplasm. It carries out the reaction shikimate + ATP = 3-phosphoshikimate + ADP + H(+). The protein operates within metabolic intermediate biosynthesis; chorismate biosynthesis; chorismate from D-erythrose 4-phosphate and phosphoenolpyruvate: step 5/7. Its function is as follows. Catalyzes the specific phosphorylation of the 3-hydroxyl group of shikimic acid using ATP as a cosubstrate. The protein is Shikimate kinase of Corynebacterium glutamicum (strain ATCC 13032 / DSM 20300 / JCM 1318 / BCRC 11384 / CCUG 27702 / LMG 3730 / NBRC 12168 / NCIMB 10025 / NRRL B-2784 / 534).